The chain runs to 410 residues: MTGCSPVFTMQQVVGVSHRLVWRTFRGTDLLMTRTLCSPGPSRPGEKRPEAAALGLYHRLPELGRTLSHTIRNQAASTAKAWWDRYEEFVGLNEVREAQGNVTEAEKVFMVARGLVREAREDLEAQQTKLKEVRDRLDRVSREDNQYLELATLEHRMLQEEKRLRIAYLRAEDSEREKFSLFSAAVRESHEKERTRAERTKNWSLIGSVLGALIGVAGSTYVNRVRLQELKALLLEAQKGPVSLQEAIREQASSYSLQQKDLQNLMVDLRGLVHVGQDQGSGSPTGPSSPRGKDIDGLSAAMKEQLNHSRQVYSCLEGLREQLDSLEKTCSQMAGVVRLAKVPAHPGMVEPLDGALPSSLLEHGSTMLALSEMEQRLEAQANRNAISSTLVTCVTFMATLPLLYMLFKTS.

Residues M1–T35 constitute a mitochondrion transit peptide. At L36–K201 the chain is on the mitochondrial matrix side. Residues V116–E143 are a coiled coil. Residues N202 to V222 traverse the membrane as a helical segment. At N223–A385 the chain is on the mitochondrial intermembrane side. The segment at G276–D296 is disordered. Low complexity predominate over residues G280–P290. The chain crosses the membrane as a helical span at residues I386–L406. Residues F407–S410 lie on the Mitochondrial matrix side of the membrane.

In terms of assembly, the mitochondrial potassium channel (mitoK(ATP)) forms a heteromultimer.

The protein localises to the mitochondrion inner membrane. The catalysed reaction is K(+)(in) = K(+)(out). With respect to regulation, channel activity inhibited by ATP via ABCB8/MITOSUR subunit. Its function is as follows. Pore-forming subunit of the mitochondrial ATP-gated potassium channel (mitoK(ATP)). Together with ATP-binding subunit ABCB8/MITOSUR of the mitoK(ATP) channel, mediates ATP-dependent K(+) currents across the mitochondrial inner membrane. An increase in ATP intracellular levels closes the channel, inhibiting K(+) transport, whereas a decrease in ATP levels enhances K(+) uptake in the mitochondrial matrix. May contribute to the homeostatic control of cellular metabolism under stress conditions by regulating the mitochondrial matrix volume. The protein is Mitochondrial potassium channel of Rattus norvegicus (Rat).